A 263-amino-acid polypeptide reads, in one-letter code: Acyl-[acyl-carrier-protein]--UDP-N-acetylglucosamine O-acyltransferase (263 aa).

This sequence belongs to the transferase hexapeptide repeat family. LpxA subfamily. In terms of assembly, homotrimer.

Its subcellular location is the cytoplasm. It carries out the reaction a (3R)-hydroxyacyl-[ACP] + UDP-N-acetyl-alpha-D-glucosamine = a UDP-3-O-[(3R)-3-hydroxyacyl]-N-acetyl-alpha-D-glucosamine + holo-[ACP]. The protein operates within glycolipid biosynthesis; lipid IV(A) biosynthesis; lipid IV(A) from (3R)-3-hydroxytetradecanoyl-[acyl-carrier-protein] and UDP-N-acetyl-alpha-D-glucosamine: step 1/6. In terms of biological role, involved in the biosynthesis of lipid A, a phosphorylated glycolipid that anchors the lipopolysaccharide to the outer membrane of the cell. In Campylobacter jejuni subsp. jejuni serotype O:6 (strain 81116 / NCTC 11828), this protein is Acyl-[acyl-carrier-protein]--UDP-N-acetylglucosamine O-acyltransferase.